Consider the following 372-residue polypeptide: Transaldolase 2 (372 aa).

Lys140 acts as the Schiff-base intermediate with substrate in catalysis.

It belongs to the transaldolase family. Type 2 subfamily.

The protein resides in the cytoplasm. It carries out the reaction D-sedoheptulose 7-phosphate + D-glyceraldehyde 3-phosphate = D-erythrose 4-phosphate + beta-D-fructose 6-phosphate. It functions in the pathway carbohydrate degradation; pentose phosphate pathway; D-glyceraldehyde 3-phosphate and beta-D-fructose 6-phosphate from D-ribose 5-phosphate and D-xylulose 5-phosphate (non-oxidative stage): step 2/3. Its function is as follows. Transaldolase is important for the balance of metabolites in the pentose-phosphate pathway. The protein is Transaldolase 2 of Streptomyces avermitilis (strain ATCC 31267 / DSM 46492 / JCM 5070 / NBRC 14893 / NCIMB 12804 / NRRL 8165 / MA-4680).